The following is a 515-amino-acid chain: 2,3-bisphosphoglycerate-independent phosphoglycerate mutase (515 aa).

Mn(2+) contacts are provided by D14 and S64. Catalysis depends on S64, which acts as the Phosphoserine intermediate. Substrate contacts are provided by residues H125, 155-156 (RD), R187, R193, 263-266 (RADR), and K337. 5 residues coordinate Mn(2+): D404, H408, D445, H446, and H464.

It belongs to the BPG-independent phosphoglycerate mutase family. In terms of assembly, monomer. Requires Mn(2+) as cofactor.

It catalyses the reaction (2R)-2-phosphoglycerate = (2R)-3-phosphoglycerate. It functions in the pathway carbohydrate degradation; glycolysis; pyruvate from D-glyceraldehyde 3-phosphate: step 3/5. In terms of biological role, catalyzes the interconversion of 2-phosphoglycerate and 3-phosphoglycerate. The protein is 2,3-bisphosphoglycerate-independent phosphoglycerate mutase of Pseudomonas paraeruginosa (strain DSM 24068 / PA7) (Pseudomonas aeruginosa (strain PA7)).